The sequence spans 132 residues: MVMTDPIADFLTRIRNGNMRKFDVVEAPASKIKRQIAEILKAEGYVKDVEYVEDNKQGVIRVFLKYGKNGEKVITNLKRISKPGLRVYVKSDDIPKVLNGLGTAIISTSTGVVTDKVARETNVGGEVIAYIW.

This sequence belongs to the universal ribosomal protein uS8 family. In terms of assembly, part of the 30S ribosomal subunit. Contacts proteins S5 and S12.

In terms of biological role, one of the primary rRNA binding proteins, it binds directly to 16S rRNA central domain where it helps coordinate assembly of the platform of the 30S subunit. The sequence is that of Small ribosomal subunit protein uS8 from Lactococcus lactis subsp. lactis (strain IL1403) (Streptococcus lactis).